We begin with the raw amino-acid sequence, 327 residues long: Thiamine-binding periplasmic protein (327 aa).

A signal peptide spans 1–18 (MLKKCLPLLLLCTAPVFA). Thiamine is bound by residues 59-60 (DG), 161-162 (ST), tryptophan 197, and 215-218 (YTTS).

This sequence belongs to the bacterial solute-binding protein 1 family. As to quaternary structure, monomer in solution. The complex is composed of two ATP-binding proteins (ThiQ), two transmembrane proteins (ThiP) and a solute-binding protein (ThiB).

It is found in the periplasm. Transport is inhibited by the sulfhydryl-specific modifier N-ethylmaleimide. In terms of biological role, part of the ABC transporter complex ThiBPQ involved in thiamine import. Binds thiamine, thiamine phosphate and thiamine diphosphate with high affinity. The polypeptide is Thiamine-binding periplasmic protein (thiB) (Escherichia coli (strain K12)).